Reading from the N-terminus, the 136-residue chain is Probable flagellum biosynthesis repressor protein FlbT 2 (136 aa).

It belongs to the FlbT family.

Has a post-transcriptional repressor function in flagellum biogenesis. Associates with the 5'-UTR of fljK mRNA and promotes its degradation. In Bradyrhizobium diazoefficiens (strain JCM 10833 / BCRC 13528 / IAM 13628 / NBRC 14792 / USDA 110), this protein is Probable flagellum biosynthesis repressor protein FlbT 2.